The chain runs to 68 residues: DNA-directed RNA polymerase subunit omega (68 aa).

This sequence belongs to the RNA polymerase subunit omega family. The RNAP catalytic core consists of 2 alpha, 1 beta, 1 beta' and 1 omega subunit. When a sigma factor is associated with the core the holoenzyme is formed, which can initiate transcription.

The catalysed reaction is RNA(n) + a ribonucleoside 5'-triphosphate = RNA(n+1) + diphosphate. Functionally, promotes RNA polymerase assembly. Latches the N- and C-terminal regions of the beta' subunit thereby facilitating its interaction with the beta and alpha subunits. This chain is DNA-directed RNA polymerase subunit omega, found in Alkaliphilus metalliredigens (strain QYMF).